Reading from the N-terminus, the 87-residue chain is U3-theraphotoxin-Hhn1q (87 aa).

Residues 1 to 24 (MVNMKASMFLTFAGLVLLFVVCYA) form the signal peptide. A propeptide spanning residues 25-52 (SESEEKEFPKEMLSSIFAVDNDFKQEER) is cleaved from the precursor. Intrachain disulfides connect C54-C67, C61-C72, and C66-C79.

The protein belongs to the neurotoxin 10 (Hwtx-1) family. 51 (Hntx-8) subfamily. Hntx-8 sub-subfamily. As to expression, expressed by the venom gland.

The protein localises to the secreted. Its function is as follows. Ion channel inhibitor. This chain is U3-theraphotoxin-Hhn1q, found in Cyriopagopus hainanus (Chinese bird spider).